The following is a 231-amino-acid chain: MSALCPLPTPPASEALLLAQARQLSGYTLGELAAMAGITTPKDLKRDKGWIGVLLEIWLGASAGSKPEQDFAALGVELKTIPVDSLGRPLETTFVCVAPLTGNSGVTWETSHVRHKLKRVLWVPVEGNRSIPLAERRVGSPLLWSPSEEEDRQLRLDWEELMDMIVLGQVERITARHGEVLQLRPKAVNARALTEAIGARGEPILTLPRGFYLKKNFTQALLARHFLLQNP.

It belongs to the MutH family.

The protein localises to the cytoplasm. In terms of biological role, sequence-specific endonuclease that cleaves unmethylated GATC sequences. It is involved in DNA mismatch repair. The sequence is that of DNA mismatch repair protein MutH from Salmonella paratyphi A (strain ATCC 9150 / SARB42).